Consider the following 235-residue polypeptide: Fibrillarin-like rRNA/tRNA 2'-O-methyltransferase (235 aa).

S-adenosyl-L-methionine-binding positions include 91 to 92 (TT), 110 to 111 (EF), 137 to 138 (DA), and 157 to 160 (DVAQ).

Belongs to the methyltransferase superfamily. Fibrillarin family. In terms of assembly, interacts with nop5. Component of box C/D small ribonucleoprotein (sRNP) particles that contain rpl7ae, FlpA and nop5, plus a guide RNA.

Functionally, involved in pre-rRNA and tRNA processing. Utilizes the methyl donor S-adenosyl-L-methionine to catalyze the site-specific 2'-hydroxyl methylation of ribose moieties in rRNA and tRNA. Site specificity is provided by a guide RNA that base pairs with the substrate. Methylation occurs at a characteristic distance from the sequence involved in base pairing with the guide RNA. This Pyrobaculum aerophilum (strain ATCC 51768 / DSM 7523 / JCM 9630 / CIP 104966 / NBRC 100827 / IM2) protein is Fibrillarin-like rRNA/tRNA 2'-O-methyltransferase.